The sequence spans 241 residues: Phosphoribosylaminoimidazole-succinocarboxamide synthase (241 aa).

This sequence belongs to the SAICAR synthetase family.

The catalysed reaction is 5-amino-1-(5-phospho-D-ribosyl)imidazole-4-carboxylate + L-aspartate + ATP = (2S)-2-[5-amino-1-(5-phospho-beta-D-ribosyl)imidazole-4-carboxamido]succinate + ADP + phosphate + 2 H(+). It participates in purine metabolism; IMP biosynthesis via de novo pathway; 5-amino-1-(5-phospho-D-ribosyl)imidazole-4-carboxamide from 5-amino-1-(5-phospho-D-ribosyl)imidazole-4-carboxylate: step 1/2. The polypeptide is Phosphoribosylaminoimidazole-succinocarboxamide synthase (Deinococcus geothermalis (strain DSM 11300 / CIP 105573 / AG-3a)).